A 258-amino-acid polypeptide reads, in one-letter code: Thiamine thiazole synthase (258 aa).

Residues Ser36, 55 to 56, Gly63, Ile127, and 153 to 155 each bind NAD(+); these read ER and HVD. Fe cation contacts are provided by Asp155 and His170. Met224 lines the NAD(+) pocket. Arg234 lines the glycine pocket.

Belongs to the THI4 family. In terms of assembly, homooctamer; tetramer of dimers. Requires Fe(2+) as cofactor.

It catalyses the reaction hydrogen sulfide + glycine + NAD(+) = ADP-5-ethyl-4-methylthiazole-2-carboxylate + nicotinamide + 3 H2O + H(+). The protein operates within cofactor biosynthesis; thiamine diphosphate biosynthesis. Its function is as follows. Involved in the biosynthesis of the thiazole moiety of thiamine. Catalyzes the conversion of NAD and glycine to adenosine diphosphate 5-(2-hydroxyethyl)-4-methylthiazole-2-carboxylate (ADT), an adenylated thiazole intermediate, using free sulfide as a source of sulfur. This chain is Thiamine thiazole synthase, found in Methanothermobacter thermautotrophicus (strain ATCC 29096 / DSM 1053 / JCM 10044 / NBRC 100330 / Delta H) (Methanobacterium thermoautotrophicum).